We begin with the raw amino-acid sequence, 331 residues long: GATA transcription factor 12 (331 aa).

Disordered regions lie at residues 30-49 and 105-138; these read ENDV…SSNF and SGFK…SVPA. Residues 34–47 show a composition bias toward low complexity; it reads VADSTTTTTITDSS. The span at 116–134 shows a compositional bias: polar residues; sequence DTGSPENPNSSSPIFTTDV. The Nuclear localization signal signature appears at 139-146; it reads KARSKRSR. Positions 174–218 are disordered; the sequence is SSQQHLSPPTSPPLLMAPLGKKQAVDGGHRRKKDVSSPESGGAEE. A GATA-type zinc finger spans residues 215–269; it reads GAEERRCLHCATDKTPQWRTGPMGPKTLCNACGVRYKSGRLVPEYRPAASPTFVL.

The protein belongs to the type IV zinc-finger family. Class A subfamily. In terms of tissue distribution, expressed in the vascular cylinder of roots. Expressed in the differentiation zone of the root stele.

It localises to the nucleus. In terms of biological role, transcriptional activator that specifically binds 5'-GATA-3' or 5'-GAT-3' motifs within gene promoters. May be involved in the regulation of some light-responsive genes. Transcription activator involved in xylem formation. Functions upstream of NAC030/VND7, a master switch of xylem vessel differentiation. This is GATA transcription factor 12 from Arabidopsis thaliana (Mouse-ear cress).